Reading from the N-terminus, the 211-residue chain is Protein GrpE (211 aa).

Over residues 1-13 (MVDKDEEQIKQNV) the composition is skewed to basic and acidic residues. The interval 1-38 (MVDKDEEQIKQNVEEDLSSTVEQTGEENIEFPSAPNHP) is disordered.

It belongs to the GrpE family. Homodimer.

It is found in the cytoplasm. Functionally, participates actively in the response to hyperosmotic and heat shock by preventing the aggregation of stress-denatured proteins, in association with DnaK and GrpE. It is the nucleotide exchange factor for DnaK and may function as a thermosensor. Unfolded proteins bind initially to DnaJ; upon interaction with the DnaJ-bound protein, DnaK hydrolyzes its bound ATP, resulting in the formation of a stable complex. GrpE releases ADP from DnaK; ATP binding to DnaK triggers the release of the substrate protein, thus completing the reaction cycle. Several rounds of ATP-dependent interactions between DnaJ, DnaK and GrpE are required for fully efficient folding. This is Protein GrpE from Protochlamydia amoebophila (strain UWE25).